Reading from the N-terminus, the 454-residue chain is MTLPLHVVILAAGEGKRMRSALPKVLQPLAGQPMLAHVIATARELQPAAIHVVHGHGGAQVQAAFADQPDLQWAEQRQQLGTGHAVQQALHAVPDAATVLVLYGDVPLIRSESLRELLHAPGRIAVLVADLANPTGYGRIVRNPEGKVAAIVEQKDADDEQRRIRTINTGILTAESTALRRWLGGLSNDNAQGEFYLTDVFARAAADYTPADMVQVSDPQDVEGANDPWQLAQLERAWQLRAARALCLQGVRMADPARVEQRGRVQVGHDVQLDIDVILEGEVTLGDGVVIGPFVRLRDVQLAAGTQVRAHCDLEGVVTEGAVQIGPFARLRPGTVLADGVHIGNFVETKKVVMGAGSKANHLTYLGDAVVGSKVNIGAGTITCNYDGVNKSQTTIGDGAFVGSNSALVAPIEIGTGATIGAGSVITRDAPPHQLSVARPRQTVIEGWERPKKK.

Positions 1-228 (MTLPLHVVIL…PQDVEGANDP (228 aa)) are pyrophosphorylase. UDP-N-acetyl-alpha-D-glucosamine contacts are provided by residues 10 to 13 (LAAG), Lys-24, Gln-76, 81 to 82 (GT), 103 to 105 (YGD), Gly-138, Glu-153, Asn-168, and Asn-226. Asp-105 is a Mg(2+) binding site. Position 226 (Asn-226) interacts with Mg(2+). Residues 229-249 (WQLAQLERAWQLRAARALCLQ) form a linker region. The N-acetyltransferase stretch occupies residues 250–454 (GVRMADPARV…IEGWERPKKK (205 aa)). Residues Arg-332 and Lys-350 each coordinate UDP-N-acetyl-alpha-D-glucosamine. His-362 serves as the catalytic Proton acceptor. Tyr-365 and Asn-376 together coordinate UDP-N-acetyl-alpha-D-glucosamine. Acetyl-CoA-binding positions include Ala-379, 385–386 (NY), Ser-404, Ala-422, and Arg-439.

This sequence in the N-terminal section; belongs to the N-acetylglucosamine-1-phosphate uridyltransferase family. In the C-terminal section; belongs to the transferase hexapeptide repeat family. Homotrimer. Mg(2+) is required as a cofactor.

Its subcellular location is the cytoplasm. The enzyme catalyses alpha-D-glucosamine 1-phosphate + acetyl-CoA = N-acetyl-alpha-D-glucosamine 1-phosphate + CoA + H(+). It catalyses the reaction N-acetyl-alpha-D-glucosamine 1-phosphate + UTP + H(+) = UDP-N-acetyl-alpha-D-glucosamine + diphosphate. The protein operates within nucleotide-sugar biosynthesis; UDP-N-acetyl-alpha-D-glucosamine biosynthesis; N-acetyl-alpha-D-glucosamine 1-phosphate from alpha-D-glucosamine 6-phosphate (route II): step 2/2. It participates in nucleotide-sugar biosynthesis; UDP-N-acetyl-alpha-D-glucosamine biosynthesis; UDP-N-acetyl-alpha-D-glucosamine from N-acetyl-alpha-D-glucosamine 1-phosphate: step 1/1. Its pathway is bacterial outer membrane biogenesis; LPS lipid A biosynthesis. Functionally, catalyzes the last two sequential reactions in the de novo biosynthetic pathway for UDP-N-acetylglucosamine (UDP-GlcNAc). The C-terminal domain catalyzes the transfer of acetyl group from acetyl coenzyme A to glucosamine-1-phosphate (GlcN-1-P) to produce N-acetylglucosamine-1-phosphate (GlcNAc-1-P), which is converted into UDP-GlcNAc by the transfer of uridine 5-monophosphate (from uridine 5-triphosphate), a reaction catalyzed by the N-terminal domain. This is Bifunctional protein GlmU from Xanthomonas campestris pv. campestris (strain B100).